We begin with the raw amino-acid sequence, 384 residues long: Cytochrome b (384 aa).

The next 4 helical transmembrane spans lie at 32 to 52, 76 to 98, 113 to 133, and 179 to 199; these read VGSL…FLAM, WLIR…LHIG, LWVI…MGYC, and FFAL…MHLM. Heme b-binding residues include histidine 82 and histidine 96. Residues histidine 183 and histidine 197 each contribute to the heme b site. Residue histidine 202 coordinates a ubiquinone. The next 4 helical transmembrane spans lie at 225–245, 289–309, 321–341, and 348–368; these read FIFK…LFVF, LGGV…PYTD, LSKF…NLGQ, and YIEL…LIVP.

Belongs to the cytochrome b family. As to quaternary structure, fungal cytochrome b-c1 complex contains 10 subunits; 3 respiratory subunits, 2 core proteins and 5 low-molecular weight proteins. Cytochrome b-c1 complex is a homodimer. Heme b serves as cofactor.

It localises to the mitochondrion inner membrane. Component of the ubiquinol-cytochrome c reductase complex (complex III or cytochrome b-c1 complex) that is part of the mitochondrial respiratory chain. The b-c1 complex mediates electron transfer from ubiquinol to cytochrome c. Contributes to the generation of a proton gradient across the mitochondrial membrane that is then used for ATP synthesis. In Candida parapsilosis (Yeast), this protein is Cytochrome b (COB).